The sequence spans 789 residues: ATP-dependent 6-phosphofructokinase (789 aa).

Residues 1–404 (MSLKRNIRRL…NLETYKLLTK (404 aa)) form an N-terminal catalytic PFK domain 1 region. ATP-binding positions include Gly41, 104–105 (RC), and 134–137 (GDGS). Asp135 serves as a coordination point for Mg(2+). Substrate contacts are provided by residues 180-182 (SID), Arg217, 224-226 (MGR), Glu280, Arg307, and 313-316 (HVQR). The active-site Proton acceptor is Asp182. The segment at 405-419 (LRTVEKDNLSGGQNF) is interdomain linker. A C-terminal regulatory PFK domain 2 region spans residues 420-789 (NVAVMNVGAP…EAMEDTEDYD (370 aa)). Beta-D-fructose 2,6-bisphosphate is bound by residues Lys489, 547 to 551 (TISNN), Arg585, 592 to 594 (MGG), Glu647, Arg673, 679 to 682 (HAQQ), and Arg753.

Belongs to the phosphofructokinase type A (PFKA) family. ATP-dependent PFK group I subfamily. Eukaryotic two domain clade 'E' sub-subfamily. In terms of assembly, homotetramer. Mg(2+) serves as cofactor.

It localises to the cytoplasm. It catalyses the reaction beta-D-fructose 6-phosphate + ATP = beta-D-fructose 1,6-bisphosphate + ADP + H(+). It functions in the pathway carbohydrate degradation; glycolysis; D-glyceraldehyde 3-phosphate and glycerone phosphate from D-glucose: step 3/4. Its activity is regulated as follows. Allosterically activated by ADP, AMP, or fructose 2,6-bisphosphate, and allosterically inhibited by ATP or citrate. Catalyzes the phosphorylation of D-fructose 6-phosphate to fructose 1,6-bisphosphate by ATP, the first committing step of glycolysis. This chain is ATP-dependent 6-phosphofructokinase (PFK), found in Haemonchus contortus (Barber pole worm).